A 686-amino-acid polypeptide reads, in one-letter code: Rhophilin-2 (686 aa).

Residues 26–100 (NPLAQTGRSK…LEGLNISVGV (75 aa)) enclose the REM-1 domain. The interval 46–66 (QILKAVRMRTGAENLLKVATN) is interaction with Rho. In terms of domain architecture, BRO1 spans 111-460 (PLIPLGLKET…RLTYAQHQEE (350 aa)). In terms of domain architecture, PDZ spans 515–593 (RSIRFTAEEG…DEIEMKVVSL (79 aa)). Thr-655 is modified (phosphothreonine).

This sequence belongs to the RHPN family. As to quaternary structure, interacts with GTP-bound RhoA and RhoB. Interacts with both GTP- and GDP-bound RhoA. According to PubMed:12473120, it does not interact with RhoA. Interacts with KRT18. As to expression, widely expressed. Highly expressed in prostate, trachea, stomach, colon, thyroid and pancreas. Expressed at lower level in brain, spinal cord, kidney, placenta and liver.

It localises to the cytoplasm. The protein resides in the perinuclear region. In terms of biological role, binds specifically to GTP-Rho. May function in a Rho pathway to limit stress fiber formation and/or increase the turnover of F-actin structures in the absence of high levels of RhoA activity. The polypeptide is Rhophilin-2 (RHPN2) (Homo sapiens (Human)).